A 558-amino-acid polypeptide reads, in one-letter code: Ribonuclease J (558 aa).

Residues His-81, His-83, Asp-85, His-86, His-148, and Asp-170 each coordinate Zn(2+). 371–375 (HVSGH) is a substrate binding site. Position 397 (His-397) interacts with Zn(2+).

This sequence belongs to the metallo-beta-lactamase superfamily. RNA-metabolizing metallo-beta-lactamase-like family. Bacterial RNase J subfamily. As to quaternary structure, homodimer. Zn(2+) is required as a cofactor.

The protein localises to the cytoplasm. In terms of biological role, an RNase that has endonuclease and 5'-3' exonuclease activity. The 5'-exonuclease activity acts on 5'-monophosphate but not 5'-triphosphate ends. Endonuclease activity can cleave within 4 nucleotides of the 5'-end of a triphosphorylated RNA. Plays the major role in pre-23S rRNA maturation, and a minor role in processing of pre-5S and pre-16S rRNA. This is Ribonuclease J from Mycolicibacterium smegmatis (strain ATCC 700084 / mc(2)155) (Mycobacterium smegmatis).